The sequence spans 507 residues: 3-octaprenyl-4-hydroxybenzoate carboxy-lyase (507 aa).

Asn-177 is a Mn(2+) binding site. Prenylated FMN-binding positions include 180-182, 194-196, and 199-200; these read IYR, RWL, and RG. Mn(2+) is bound at residue Glu-243. Catalysis depends on Asp-302, which acts as the Proton donor.

Belongs to the UbiD family. As to quaternary structure, homohexamer. Requires prenylated FMN as cofactor. It depends on Mn(2+) as a cofactor.

The protein localises to the cell membrane. It catalyses the reaction a 4-hydroxy-3-(all-trans-polyprenyl)benzoate + H(+) = a 2-(all-trans-polyprenyl)phenol + CO2. Its pathway is cofactor biosynthesis; ubiquinone biosynthesis. Catalyzes the decarboxylation of 3-octaprenyl-4-hydroxy benzoate to 2-octaprenylphenol, an intermediate step in ubiquinone biosynthesis. The sequence is that of 3-octaprenyl-4-hydroxybenzoate carboxy-lyase from Cupriavidus metallidurans (strain ATCC 43123 / DSM 2839 / NBRC 102507 / CH34) (Ralstonia metallidurans).